The primary structure comprises 491 residues: Probable glycine dehydrogenase (decarboxylating) subunit 2 (491 aa).

The residue at position 264 (K264) is an N6-(pyridoxal phosphate)lysine.

Belongs to the GcvP family. C-terminal subunit subfamily. In terms of assembly, the glycine cleavage system is composed of four proteins: P, T, L and H. In this organism, the P 'protein' is a heterodimer of two subunits. Pyridoxal 5'-phosphate is required as a cofactor.

It carries out the reaction N(6)-[(R)-lipoyl]-L-lysyl-[glycine-cleavage complex H protein] + glycine + H(+) = N(6)-[(R)-S(8)-aminomethyldihydrolipoyl]-L-lysyl-[glycine-cleavage complex H protein] + CO2. In terms of biological role, the glycine cleavage system catalyzes the degradation of glycine. The P protein binds the alpha-amino group of glycine through its pyridoxal phosphate cofactor; CO(2) is released and the remaining methylamine moiety is then transferred to the lipoamide cofactor of the H protein. This chain is Probable glycine dehydrogenase (decarboxylating) subunit 2, found in Coxiella burnetii (strain CbuG_Q212) (Coxiella burnetii (strain Q212)).